We begin with the raw amino-acid sequence, 74 residues long: Probable protein E5B (74 aa).

In Homo sapiens (Human), this protein is Probable protein E5B.